The following is a 362-amino-acid chain: dTDP-glucose 4,6-dehydratase (362 aa).

NAD(+) contacts are provided by residues Phe11–Ile12, Asp32–Thr35, Asp58–Ile59, Leu80–Ser84, and Thr99. Ser84 contacts substrate. Position 133 (Thr133) interacts with substrate. Residue Asp134 is the Proton donor of the active site. Catalysis depends on proton acceptor residues Glu135 and Tyr167. Tyr167 to Lys171 is a binding site for NAD(+). Asn196 is a substrate binding site. Asn197 provides a ligand contact to NAD(+). Substrate contacts are provided by residues Lys206–Leu207, Pro222–Tyr224, Arg231, Asn266, and Asp300–His304.

It belongs to the NAD(P)-dependent epimerase/dehydratase family. dTDP-glucose dehydratase subfamily. NAD(+) serves as cofactor.

The enzyme catalyses dTDP-alpha-D-glucose = dTDP-4-dehydro-6-deoxy-alpha-D-glucose + H2O. It participates in bacterial outer membrane biogenesis; LPS O-antigen biosynthesis. Catalyzes the dehydration of dTDP-D-glucose to form dTDP-4-dehydro-6-deoxy-D-glucose via a three-step process involving oxidation, dehydration and reduction. This reaction is a step in the biosynthesis of D-fucofuranose, a component of E.coli O52 O antigen. This is dTDP-glucose 4,6-dehydratase (rmlB) from Escherichia coli.